We begin with the raw amino-acid sequence, 111 residues long: Ribonuclease P protein component (111 aa).

Belongs to the RnpA family. In terms of assembly, consists of a catalytic RNA component (M1 or rnpB) and a protein subunit.

It catalyses the reaction Endonucleolytic cleavage of RNA, removing 5'-extranucleotides from tRNA precursor.. RNaseP catalyzes the removal of the 5'-leader sequence from pre-tRNA to produce the mature 5'-terminus. It can also cleave other RNA substrates such as 4.5S RNA. The protein component plays an auxiliary but essential role in vivo by binding to the 5'-leader sequence and broadening the substrate specificity of the ribozyme. The sequence is that of Ribonuclease P protein component from Borrelia garinii subsp. bavariensis (strain ATCC BAA-2496 / DSM 23469 / PBi) (Borreliella bavariensis).